Reading from the N-terminus, the 3102-residue chain is Laminin subunit alpha lam-3 (3102 aa).

Residues 1–16 form the signal peptide; it reads MRLWLGLLAVSNIALG. Asn-19, Asn-135, and Asn-237 each carry an N-linked (GlcNAc...) asparagine glycan. Residues 44-295 enclose the Laminin N-terminal domain; that stretch reads SERGLFPNIF…SISDISIGGQ (252 aa). 16 cysteine pairs are disulfide-bonded: Cys-296–Cys-305, Cys-298–Cys-316, Cys-318–Cys-327, Cys-330–Cys-350, Cys-353–Cys-362, Cys-355–Cys-387, Cys-390–Cys-399, Cys-402–Cys-420, Cys-423–Cys-435, Cys-425–Cys-451, Cys-453–Cys-462, Cys-465–Cys-475, Cys-478–Cys-491, Cys-480–Cys-496, Cys-498–Cys-507, and Cys-510–Cys-525. Laminin EGF-like domains follow at residues 296-352, 353-422, 423-477, and 478-527; these read CICY…VCQQ, CQCF…ACRT, CECD…TCEP, and CPCN…GCQP. The 193-residue stretch at 548-740 folds into the Laminin IV type A 1 domain; the sequence is INNIGWHLTD…QDTLMGGVEV (193 aa). Intrachain disulfides connect Cys-774–Cys-783, Cys-776–Cys-790, Cys-793–Cys-802, Cys-805–Cys-822, Cys-825–Cys-838, Cys-827–Cys-858, Cys-861–Cys-870, Cys-873–Cys-886, Cys-889–Cys-903, Cys-891–Cys-910, Cys-913–Cys-922, Cys-925–Cys-938, Cys-941–Cys-953, Cys-943–Cys-960, Cys-962–Cys-971, Cys-974–Cys-985, Cys-988–Cys-1000, Cys-990–Cys-1007, Cys-1009–Cys-1018, Cys-1021–Cys-1033, Cys-1036–Cys-1049, Cys-1038–Cys-1056, Cys-1058–Cys-1067, Cys-1070–Cys-1083, Cys-1086–Cys-1098, Cys-1088–Cys-1105, Cys-1107–Cys-1116, Cys-1119–Cys-1131, Cys-1134–Cys-1144, Cys-1137–Cys-1151, and Cys-1153–Cys-1162. Laminin EGF-like domains follow at residues 774–824, 825–888, 889–940, 941–987, 988–1035, 1036–1085, 1086–1133, 1134–1180, 1181–1226, and 1227–1283; these read CDCH…ACEQ, CECP…KCIE, CTCN…TCKP, CGCH…GCPA, CDCN…GCQF, CHCN…GCED, CGCD…GCTE, CEPC…GCKL, CDCS…TCEP, and CGCN…GCTE. A glycan (N-linked (GlcNAc...) asparagine) is linked at Asn-796. The N-linked (GlcNAc...) asparagine glycan is linked to Asn-991. Residue Asn-1027 is glycosylated (N-linked (GlcNAc...) asparagine). N-linked (GlcNAc...) asparagine glycosylation occurs at Asn-1076. A glycan (N-linked (GlcNAc...) asparagine) is linked at Asn-1164. Intrachain disulfides connect Cys-1165–Cys-1178, Cys-1181–Cys-1193, Cys-1183–Cys-1200, Cys-1202–Cys-1211, Cys-1214–Cys-1224, Cys-1227–Cys-1246, Cys-1229–Cys-1252, Cys-1254–Cys-1263, and Cys-1266–Cys-1281. Asn-1288 carries N-linked (GlcNAc...) asparagine glycosylation. Residues 1295–1496 form the Laminin IV type A 2 domain; it reads QSDLVWQQMY…STTKAIGVEK (202 aa). Intrachain disulfides connect Cys-1540/Cys-1549, Cys-1542/Cys-1556, Cys-1559/Cys-1568, Cys-1571/Cys-1587, Cys-1590/Cys-1603, Cys-1592/Cys-1614, Cys-1617/Cys-1626, Cys-1629/Cys-1644, Cys-1647/Cys-1659, Cys-1649/Cys-1666, Cys-1668/Cys-1677, and Cys-1680/Cys-1691. Laminin EGF-like domains are found at residues 1540–1589, 1590–1646, and 1647–1693; these read CSCH…ACTK, CACP…TCSP, and CDCH…VCTS. 9 N-linked (GlcNAc...) asparagine glycosylation sites follow: Asn-1717, Asn-1734, Asn-1777, Asn-1806, Asn-1839, Asn-1875, Asn-1969, Asn-1984, and Asn-2048. The interval 2061-2084 is disordered; that stretch reads EAVSKMLGSEGSESGDANEESLRS. N-linked (GlcNAc...) asparagine glycosylation is found at Asn-2091, Asn-2193, Asn-2369, and Asn-2479. Laminin G-like domains lie at 2467–2644, 2652–2839, and 2913–3088; these read SQRG…TDGC, DKII…IGMC, and RYGL…AKAC. A disulfide bridge links Cys-2617 with Cys-2644. Asn-2672 and Asn-2686 each carry an N-linked (GlcNAc...) asparagine glycan. A disulfide bond links Cys-2814 and Cys-2839. Asn-2932, Asn-2959, and Asn-3007 each carry an N-linked (GlcNAc...) asparagine glycan. Cys-3058 and Cys-3088 are joined by a disulfide.

As to quaternary structure, laminin is a complex glycoprotein, consisting of three different polypeptide chains (alpha, beta, gamma), which are bound to each other by disulfide bonds into a cross-shaped molecule comprising one long and three short arms with globules at each end.

It localises to the secreted. The protein localises to the extracellular space. The protein resides in the extracellular matrix. It is found in the basement membrane. Binding to cells via a high affinity receptor, laminin is thought to mediate the attachment, migration and organization of cells into tissues during embryonic development by interacting with other extracellular matrix components. Required to assemble a stable basement membrane and for organizing receptor complexes and cytoskeletal components to the proper cell surfaces. During embryogenesis, does not require the presence of collagen type IV in order to associate with cell surfaces, prior to assembly of the prototypical basement membrane. Plays an important role in muscle contraction of the body. Probably plays a distinct role from the related laminin subunit alpha epi-1. In Caenorhabditis elegans, this protein is Laminin subunit alpha lam-3.